The primary structure comprises 393 residues: S-adenosylmethionine synthase 2 (393 aa).

Glu-9 lines the Mg(2+) pocket. Residue His-15 coordinates ATP. Glu-43 contacts K(+). 2 residues coordinate L-methionine: Glu-56 and Gln-99. Residues 167-169 (DGK), 235-238 (SGRF), Asp-246, 252-253 (RK), Ala-269, Lys-273, and Lys-277 contribute to the ATP site. Asp-246 is an L-methionine binding site. Lys-277 contacts L-methionine.

Belongs to the AdoMet synthase family. Homotetramer. Requires Mn(2+) as cofactor. Mg(2+) serves as cofactor. The cofactor is Co(2+). K(+) is required as a cofactor.

It localises to the cytoplasm. The catalysed reaction is L-methionine + ATP + H2O = S-adenosyl-L-methionine + phosphate + diphosphate. Its pathway is amino-acid biosynthesis; S-adenosyl-L-methionine biosynthesis; S-adenosyl-L-methionine from L-methionine: step 1/1. Its function is as follows. Catalyzes the formation of S-adenosylmethionine from methionine and ATP. The reaction comprises two steps that are both catalyzed by the same enzyme: formation of S-adenosylmethionine (AdoMet) and triphosphate, and subsequent hydrolysis of the triphosphate. In Populus trichocarpa (Western balsam poplar), this protein is S-adenosylmethionine synthase 2 (METK2).